The following is a 583-amino-acid chain: Kelch-like protein 35 (583 aa).

The BTB domain maps to 41–119 (TDVVLRAGGR…VYGAGVRLRA (79 aa)). Positions 146–248 (LEGRLRAANS…LEHVRLPLLA (103 aa)) constitute a BACK domain. Kelch repeat units lie at residues 301–350 (VIVV…ALRN), 352–394 (VYVS…VVQG), 395–441 (QLFA…SCAG), 443–489 (LFVI…SLED), 490–531 (TIYV…VCDG), and 533–579 (VHIL…TIIQ).

In Homo sapiens (Human), this protein is Kelch-like protein 35 (KLHL35).